The following is a 697-amino-acid chain: Glycine--tRNA ligase beta subunit (697 aa).

This sequence belongs to the class-II aminoacyl-tRNA synthetase family. In terms of assembly, tetramer of two alpha and two beta subunits.

The protein resides in the cytoplasm. It carries out the reaction tRNA(Gly) + glycine + ATP = glycyl-tRNA(Gly) + AMP + diphosphate. This is Glycine--tRNA ligase beta subunit from Solidesulfovibrio magneticus (strain ATCC 700980 / DSM 13731 / RS-1) (Desulfovibrio magneticus).